Consider the following 702-residue polypeptide: Ribosomal RNA large subunit methyltransferase K/L (702 aa).

The region spanning 43–154 (LIYQSLMWSR…KETASIALDL (112 aa)) is the THUMP domain.

Belongs to the methyltransferase superfamily. RlmKL family.

It is found in the cytoplasm. It carries out the reaction guanosine(2445) in 23S rRNA + S-adenosyl-L-methionine = N(2)-methylguanosine(2445) in 23S rRNA + S-adenosyl-L-homocysteine + H(+). The enzyme catalyses guanosine(2069) in 23S rRNA + S-adenosyl-L-methionine = N(2)-methylguanosine(2069) in 23S rRNA + S-adenosyl-L-homocysteine + H(+). Functionally, specifically methylates the guanine in position 2445 (m2G2445) and the guanine in position 2069 (m7G2069) of 23S rRNA. This is Ribosomal RNA large subunit methyltransferase K/L from Salmonella paratyphi B (strain ATCC BAA-1250 / SPB7).